The chain runs to 421 residues: Alpha-1-antiproteinase 2 (421 aa).

An N-terminal signal peptide occupies residues 1–24; that stretch reads MPSSVPWCLLLLAGLCCLVPSSLA. Residues Asn73, Asn110, and Asn274 are each glycosylated (N-linked (GlcNAc...) asparagine). The tract at residues 376–395 is RCL; it reads GTTMWEIMPISLPPDLKFNR.

Belongs to the serpin family. N-glycosylated with carbohydrates having biantennary side chains. As to expression, plasma.

The protein localises to the secreted. Functionally, inhibitor of serine proteases. The polypeptide is Alpha-1-antiproteinase 2 (Equus caballus (Horse)).